A 74-amino-acid chain; its full sequence is NAD(P)H-quinone oxidoreductase subunit L (74 aa).

2 consecutive transmembrane segments (helical) span residues 5–25 (LIIA…VPAA) and 43–63 (AFMY…APLL).

This sequence belongs to the complex I NdhL subunit family. In terms of assembly, NDH-1 can be composed of about 15 different subunits; different subcomplexes with different compositions have been identified which probably have different functions.

The protein resides in the cellular thylakoid membrane. The enzyme catalyses a plastoquinone + NADH + (n+1) H(+)(in) = a plastoquinol + NAD(+) + n H(+)(out). It carries out the reaction a plastoquinone + NADPH + (n+1) H(+)(in) = a plastoquinol + NADP(+) + n H(+)(out). NDH-1 shuttles electrons from an unknown electron donor, via FMN and iron-sulfur (Fe-S) centers, to quinones in the respiratory and/or the photosynthetic chain. The immediate electron acceptor for the enzyme in this species is believed to be plastoquinone. Couples the redox reaction to proton translocation, and thus conserves the redox energy in a proton gradient. Cyanobacterial NDH-1 also plays a role in inorganic carbon-concentration. This is NAD(P)H-quinone oxidoreductase subunit L from Synechococcus elongatus (strain ATCC 33912 / PCC 7942 / FACHB-805) (Anacystis nidulans R2).